A 378-amino-acid chain; its full sequence is Cytochrome b (378 aa).

4 helical membrane-spanning segments follow: residues 34–54, 78–99, 114–134, and 179–199; these read FGSL…FLAM, WFLR…FMHV, WNTG…GYVL, and FFTF…IHLL. Heme b-binding residues include histidine 84 and histidine 98. Residues histidine 183 and histidine 197 each contribute to the heme b site. Histidine 202 serves as a coordination point for a ubiquinone. 4 consecutive transmembrane segments (helical) span residues 227–247, 289–309, 321–341, and 348–368; these read YKDI…IWKF, LGGV…PFTH, LNQI…WIGA, and YVLT…INPL.

Belongs to the cytochrome b family. The main subunits of complex b-c1 are: cytochrome b, cytochrome c1 and the Rieske protein. Heme b serves as cofactor.

It is found in the mitochondrion inner membrane. Component of the ubiquinol-cytochrome c reductase complex (complex III or cytochrome b-c1 complex) that is part of the mitochondrial respiratory chain. The b-c1 complex mediates electron transfer from ubiquinol to cytochrome c. Contributes to the generation of a proton gradient across the mitochondrial membrane that is then used for ATP synthesis. In Anopheles quadrimaculatus (Common malaria mosquito), this protein is Cytochrome b (MT-CYB).